A 304-amino-acid chain; its full sequence is Glycine--tRNA ligase alpha subunit (304 aa).

Belongs to the class-II aminoacyl-tRNA synthetase family. As to quaternary structure, tetramer of two alpha and two beta subunits.

The protein resides in the cytoplasm. It carries out the reaction tRNA(Gly) + glycine + ATP = glycyl-tRNA(Gly) + AMP + diphosphate. This is Glycine--tRNA ligase alpha subunit from Vibrio atlanticus (strain LGP32) (Vibrio splendidus (strain Mel32)).